A 360-amino-acid chain; its full sequence is Ribosomal RNA large subunit methyltransferase F (360 aa).

Positions methionine 1 to leucine 38 are disordered. Residues arginine 10–proline 20 show a composition bias toward basic residues.

This sequence belongs to the methyltransferase superfamily. METTL16/RlmF family.

The protein resides in the cytoplasm. It catalyses the reaction adenosine(1618) in 23S rRNA + S-adenosyl-L-methionine = N(6)-methyladenosine(1618) in 23S rRNA + S-adenosyl-L-homocysteine + H(+). Functionally, specifically methylates the adenine in position 1618 of 23S rRNA. The protein is Ribosomal RNA large subunit methyltransferase F of Shewanella frigidimarina (strain NCIMB 400).